A 207-amino-acid polypeptide reads, in one-letter code: Protein lin-7 homolog B (207 aa).

The short motif at 1–13 is the Kinase interacting site element; sequence MAALVEPLGLERD. In terms of domain architecture, L27 spans 10–65; sequence LERDVSRAVELLERLQRSGELPPQKLQALQRVLQSRFCSAIREVYEQLYDTLDITG. The 83-residue stretch at 93 to 175 folds into the PDZ domain; that stretch reads VVELPKTDEG…SVKLVVRYTP (83 aa). The tract at residues 187–207 is disordered; sequence KMRSARRRQQHHSYTSLESRG. A compositionally biased stretch (polar residues) spans 198–207; that stretch reads HSYTSLESRG.

The protein belongs to the lin-7 family. In terms of assembly, forms a complex with CASK and CASKIN1. Component of the brain-specific heterotrimeric complex (LIN-10-LIN-2-LIN-7 complex) composed of at least APBA1, CASK, and LIN7, which associates with the motor protein KIF17 to transport vesicles along microtubules. Forms a heterotrimeric complex composed of MMP5, LIN7B and PATJ; the N-terminal L27 domain of PALS1 interacts with the L27 domain of PATJ and the C-terminal L27 domain of PALS1 interacts with the L27 domain of LIN7B. Forms a heterotrimeric complex with DLG1 and CASK via their L27 domains. Interacts with DLG4 and GRIN2B as well as CDH1 and CTNNB1, the channels KCNJ12/Kir2.2, KCNJ4/Kir2.3 and probably KCNJ2/Kir2.1 and SLC6A12/BGT-1 via its PDZ domain. The association of LIN7A with cadherin and beta-catenin is calcium-dependent, occurs at synaptic junctions and requires the actin cytoskeleton. Interacts with EGFR, ERBB2, ERBB3 and ERBB4 with both PDZ and KID domains. Associates with KIF17 via APBA1. Interacts with ASIC3. Interacts with TOPK. Interacts with RTKN. Interacts with APBA1. Interacts with MPP7. Interacts with DLG2. Interacts with DLG3. Expressed in the kidney; predominantly in the vasa recta.

The protein localises to the cell membrane. It is found in the basolateral cell membrane. The protein resides in the cell junction. It localises to the postsynaptic density membrane. Its subcellular location is the tight junction. Functionally, plays a role in establishing and maintaining the asymmetric distribution of channels and receptors at the plasma membrane of polarized cells. Forms membrane-associated multiprotein complexes that may regulate delivery and recycling of proteins to the correct membrane domains. The tripartite complex composed of LIN7 (LIN7A, LIN7B or LIN7C), CASK and APBA1 associates with the motor protein KIF17 to transport vesicles containing N-methyl-D-aspartate (NMDA) receptor subunit NR2B along microtubules. This complex may have the potential to couple synaptic vesicle exocytosis to cell adhesion in brain. Ensures the proper localization of GRIN2B (subunit 2B of the NMDA receptor) to neuronal postsynaptic density and may function in localizing synaptic vesicles at synapses where it is recruited by beta-catenin and cadherin. Required to localize Kir2 channels, GABA transporter (SLC6A12) and EGFR/ERBB1, ERBB2, ERBB3 and ERBB4 to the basolateral membrane of epithelial cells. May increase the amplitude of ASIC3 acid-evoked currents by stabilizing the channel at the cell surface. The sequence is that of Protein lin-7 homolog B (Lin7b) from Mus musculus (Mouse).